Consider the following 291-residue polypeptide: Verruculogen synthase (291 aa).

This sequence belongs to the PhyH family. Homodimer. The cofactor is Fe cation.

The catalysed reaction is fumitremorgin B + 2-oxoglutarate + AH2 + 2 O2 = verruculogen + succinate + A + CO2 + H2O. Its pathway is mycotoxin biosynthesis. Verruculogen synthase; part of the gene cluster that mediates the biosynthesis of fumitremorgins, indole alkaloids that carry not only intriguing chemical structures, but also interesting biological and pharmacological activities. The biosynthesis of fumitremorgin-type alkaloids begins by condensation of the two amino acids L-tryptophan and L-proline to brevianamide F, catalyzed by the non-ribosomal peptide synthetase ftmPS/ftmA. Brevianamide F is then prenylated by the prenyltransferase ftmPT1/ftmB in the presence of dimethylallyl diphosphate, resulting in the formation of tryprostatin B. The three cytochrome P450 monooxygenases, ftmP450-1/ftmC, ftmP450-2/ftmE and ftmP450-3/FtmG, are responsible for the conversion of tryprostatin B to 6-hydroxytryprostatin B, tryprostatin A to fumitremorgin C and fumitremorgin C to 12,13-dihydroxyfumitremorgin C, respectively. The putative methyltransferase ftmMT/ftmD is expected for the conversion of 6-hydroxytryprostatin B to tryprostatin A. FtmPT2/FtmH catalyzes the prenylation of 12,13-dihydroxyfumitre-morgin C in the presence of dimethylallyl diphosphate, resulting in the formation of fumitremorgin B. Fumitremorgin B is further converted to verruculogen by ftmOx1/ftmF via the insertion of an endoperoxide bond between the two prenyl moieties. Finally, verruculogen is further converted to fumitremorgin A by the verruculogen prenyltransferase ftmPT3. The polypeptide is Verruculogen synthase (Neosartorya fischeri (strain ATCC 1020 / DSM 3700 / CBS 544.65 / FGSC A1164 / JCM 1740 / NRRL 181 / WB 181) (Aspergillus fischerianus)).